The sequence spans 472 residues: WASH complex subunit 1 (472 aa).

The interval 1-51 (MPQNRSVESQAYSLPLILPDLRREEAIHQITDTLQHLQTVSNDIFSRILQR) is required for WASH complex assembly. Disordered regions lie at residues 294–411 (DRQD…GGDL) and 429–472 (KVPA…DWES). The segment covering 301–334 (LPPPPPPPPPPPPPPPPEPSALSPPAPPPPPLSI) has biased composition (pro residues). A VCA region spans residues 352-472 (QGAPKEVVNP…GDGDEDDWES (121 aa)). The 23-residue stretch at 364-386 (GRASLLESIRQAGGIGKANLRNV) folds into the WH2 domain. Residues 385-400 (NVKEKKLEKKKMKEQE) are compositionally biased toward basic and acidic residues.

This sequence belongs to the WASH1 family. Component of the WASH complex.

It localises to the early endosome membrane. Its subcellular location is the recycling endosome membrane. Acts as a nucleation-promoting factor at the surface of endosomes, where it recruits and activates the Arp2/3 complex to induce actin polymerization, playing a key role in the fission of tubules that serve as transport intermediates during endosome sorting. The protein is WASH complex subunit 1 of Xenopus laevis (African clawed frog).